Reading from the N-terminus, the 456-residue chain is Bifunctional protein GlmU (456 aa).

The tract at residues 1 to 229 (MTKKALSAVI…VMEVEGANNR (229 aa)) is pyrophosphorylase. UDP-N-acetyl-alpha-D-glucosamine-binding positions include 11–14 (LAAG), lysine 25, glutamine 76, 81–82 (GT), 103–105 (YGD), glycine 140, glutamate 154, asparagine 169, and asparagine 227. Residue aspartate 105 coordinates Mg(2+). A Mg(2+)-binding site is contributed by asparagine 227. A linker region spans residues 230–250 (LQLAALERYLQNKQASKLLLE). Residues 251-456 (GVMIYDPARF…QGWQRPIKKK (206 aa)) form an N-acetyltransferase region. UDP-N-acetyl-alpha-D-glucosamine-binding residues include arginine 333 and lysine 351. Catalysis depends on histidine 363, which acts as the Proton acceptor. UDP-N-acetyl-alpha-D-glucosamine contacts are provided by tyrosine 366 and asparagine 377. Acetyl-CoA contacts are provided by residues alanine 380, 386–387 (NY), serine 405, alanine 423, and arginine 440.

This sequence in the N-terminal section; belongs to the N-acetylglucosamine-1-phosphate uridyltransferase family. In the C-terminal section; belongs to the transferase hexapeptide repeat family. Homotrimer. The cofactor is Mg(2+).

It is found in the cytoplasm. The catalysed reaction is alpha-D-glucosamine 1-phosphate + acetyl-CoA = N-acetyl-alpha-D-glucosamine 1-phosphate + CoA + H(+). It catalyses the reaction N-acetyl-alpha-D-glucosamine 1-phosphate + UTP + H(+) = UDP-N-acetyl-alpha-D-glucosamine + diphosphate. Its pathway is nucleotide-sugar biosynthesis; UDP-N-acetyl-alpha-D-glucosamine biosynthesis; N-acetyl-alpha-D-glucosamine 1-phosphate from alpha-D-glucosamine 6-phosphate (route II): step 2/2. The protein operates within nucleotide-sugar biosynthesis; UDP-N-acetyl-alpha-D-glucosamine biosynthesis; UDP-N-acetyl-alpha-D-glucosamine from N-acetyl-alpha-D-glucosamine 1-phosphate: step 1/1. It functions in the pathway bacterial outer membrane biogenesis; LPS lipid A biosynthesis. Its function is as follows. Catalyzes the last two sequential reactions in the de novo biosynthetic pathway for UDP-N-acetylglucosamine (UDP-GlcNAc). The C-terminal domain catalyzes the transfer of acetyl group from acetyl coenzyme A to glucosamine-1-phosphate (GlcN-1-P) to produce N-acetylglucosamine-1-phosphate (GlcNAc-1-P), which is converted into UDP-GlcNAc by the transfer of uridine 5-monophosphate (from uridine 5-triphosphate), a reaction catalyzed by the N-terminal domain. The chain is Bifunctional protein GlmU from Haemophilus influenzae (strain PittEE).